The primary structure comprises 261 residues: VNTITFDVGNATINKYATFMESLRNEAKDPTLKCYGIPMLPDSNLTPKYVLVKLQDASSKTITLMLRRNNLYVMGYSDLYNGKCRYHIFNDISSTESTDVENTLCPNSNSREKKAINYNSQYSTLQNKAGVSSRSQVQLGIQILNSDIGKISGVSTFTDKTEAEFLLVAIQMVSEAARFKYIENQVKTNFNRAFNPNPKVLSLEENWGKISLAIHNAKNGALTSPLELKNADDTKWIVLRVDEIKPDMGLLNYVSGTCQTT.

N-linked (GlcNAc...) asparagine; in PD-L3 glycosylation occurs at asparagine 10. Cystine bridges form between cysteine 34-cysteine 258 and cysteine 84-cysteine 105. Glutamate 175 is a catalytic residue.

This sequence belongs to the ribosome-inactivating protein family. Type 1 RIP subfamily.

It catalyses the reaction Endohydrolysis of the N-glycosidic bond at one specific adenosine on the 28S rRNA.. Its function is as follows. Inhibits protein synthesis. Does not cleave supercoiled pBR322 dsDNA. The polypeptide is Ribosome-inactivating protein PD-L3/PD-L4 (Phytolacca dioica (Bella sombra tree)).